Here is a 1331-residue protein sequence, read N- to C-terminus: MEGGGGSGGGGGPVPAEAPEEAGEPPQGRLPPGPEGAAGLAEPESTGDAAGGEAEGGRGPRRALRAVYVRSESSQGAAAGGGPEAGALKCLLRACEAEGAHLTSVPFGELDFGETAVLDAFYDADVAIVDMSDISRQPSLFYHLGVRESFDMANNVILYYDTDADTALSLKDMVTQKNTASSGNYYFIPYTVTPCADYFCCESDAQRRASEYMQPNWDTILGPLCMPLVDRFTSLLKDIRVTSCAYYKETLLNDIRKAREKYQGDELAKELTRIKFRMDNIEVLTSDIIINLLLSYRDIQDYDAMVKLVETLKMLPTCDLADQHNIKFHYAFALNRRNSTGDREKALQVMLQVLQSCDHPAPDMFCLCGRIYKDIFLDSGCEEDASRDSAIEWYRKGFELQSSLYSGINLAVLLIVSGQQFETSMELRKIGVRLNSLLGRKGSLEKMNNYWDVGQFFTVSMLASDIGKAVQAAERLFKLKPPVWYLRSLVQNLLLIQRFKKPITEHSPRQERLNFWLDIIFEATNEVTNGLRFPVLVIEPTKVYQPSYVSINNEAEERTVSLWHVSPTEMKQIHEWNFTASSIKGISLSKFDERCCFLYVHDNSDDFQIYFSTEDQCNRFCSLVKEMLNNGVGSTVELEGEADGDTLEYEYDHDANGERVVLGKGSYGIVYAGRDLSNQVRIAIKEIPERDIRYSQPLHEEIALHKYLKHRNIVQYLGSVSENGYIKIFMEQVPGGSLSALLRSKWGPMKEPTIKFYTKQILEGLKYLHENQIVHRDIKGDNVLVNTYSGVVKISDFGTSKRLAGINPCTETFTGTLQYMAPEIIDQGPRGYGAPADIWSLGCTIIEMATSRPPFHELGEPQAAMFKVGMFKIHPEIPEALSAEARAFILSCFEPDPQKRVTAADLLQEGFLRQVNKGKKNRIAFKPSEGVRSGTGTLALPSSGELVGSSSSEHGSISPDSDAQPDAFFEKVQVPKHQLSHLLSVPDESPALDDRSTALPPEERDPGLFLLRKDSERRAILYRILWEEQNQVASNLQECVVQSSEELLLSVSHIKQIIGILRDFIRSPEHRVMAATISKLKVDLDFDSSSINQIHLILFGFQDAVNRILRNHLIRPHWMFAMDNIIRRAVQAAVTILIPELQAHFEPASETEGVDKDTEVEGDYPLVDLLSQEVHVTPRGTRPGSVAIQEGQPHQQDPSLQLSKLRQETNRLWEHLVQKEREYQNLLRLILDQKTQELYHLQLQYKSNGGTENPPPPDGLGTDRELIDWLQLQGVDANTIEKIVEEDYTLSDILNDITKEDLRCLRLRGGVLCRLWHAVSQHRRQMQESSQ.

The segment covering 1-13 (MEGGGGSGGGGGP) has biased composition (gly residues). The interval 1 to 61 (MEGGGGSGGG…GEAEGGRGPR (61 aa)) is disordered. Residues 656-912 (NGERVVLGKG…AADLLQEGFL (257 aa)) enclose the Protein kinase domain. Residues 662-670 (LGKGSYGIV) and Lys685 each bind ATP. Asp777 functions as the Proton acceptor in the catalytic mechanism. Disordered stretches follow at residues 934-964 (GTGT…SDAQ) and 983-1005 (LSVP…EERD). Residues 940–962 (LPSSGELVGSSSSEHGSISPDSD) are compositionally biased toward low complexity. The span at 992–1005 (LDDRSTALPPEERD) shows a compositional bias: basic and acidic residues. Residues 1216 to 1236 (LVQKEREYQNLLRLILDQKTQ) are a coiled coil.

This sequence belongs to the protein kinase superfamily. STE Ser/Thr protein kinase family. MAP kinase kinase kinase subfamily. Mg(2+) is required as a cofactor.

The catalysed reaction is L-seryl-[protein] + ATP = O-phospho-L-seryl-[protein] + ADP + H(+). The enzyme catalyses L-threonyl-[protein] + ATP = O-phospho-L-threonyl-[protein] + ADP + H(+). With respect to regulation, contains an N-terminal autoinhibitory domain. Activated by phosphorylation at Thr-816, inhibited by phosphorylation at Ser-928. Functionally, serine/threonine kinase which acts as a component of the MAP kinase signal transduction pathway. Once activated, acts as an upstream activator of the p38 MAPK signal transduction cascade through the phosphorylation and activation of several MAP kinase kinases. May function in a signal transduction pathway that is activated by various cell stresses and leads to apoptosis. Involved in phosphorylation of WNK4 in response to osmotic stress or hypotonic low-chloride stimulation via the p38 MAPK signal transduction cascade. This is Mitogen-activated protein kinase kinase kinase 15 from Mus musculus (Mouse).